Consider the following 224-residue polypeptide: Heme response regulator HssR (224 aa).

The region spanning 3–116 is the Response regulatory domain; sequence NCLIVDDDKK…ELLFRIKAVL (114 aa). Residue Asp-52 is modified to 4-aspartylphosphate. The segment at residues 124–222 is a DNA-binding region (ompR/PhoB-type); that stretch reads DNELQLGNLI…VRGQGYRVDQ (99 aa).

Post-translationally, phosphorylated by HssS.

It is found in the cytoplasm. Its function is as follows. Member of the two-component regulatory system HssS/HssR involved in intracellular heme homeostasis and tempering of staphylococcal virulence. Phosphorylated HssR binds to a direct repeat sequence within hrtAB promoter and activates the expression of hrtAB, an efflux pump, in response to extracellular heme, hemin, hemoglobin or blood. This is Heme response regulator HssR (hssR) from Staphylococcus epidermidis (strain ATCC 12228 / FDA PCI 1200).